Consider the following 358-residue polypeptide: 4-hydroxy-3-methylbut-2-en-1-yl diphosphate synthase (flavodoxin) (358 aa).

Residues Cys-265, Cys-268, Cys-300, and Glu-307 each contribute to the [4Fe-4S] cluster site.

Belongs to the IspG family. [4Fe-4S] cluster serves as cofactor.

It catalyses the reaction (2E)-4-hydroxy-3-methylbut-2-enyl diphosphate + oxidized [flavodoxin] + H2O + 2 H(+) = 2-C-methyl-D-erythritol 2,4-cyclic diphosphate + reduced [flavodoxin]. It functions in the pathway isoprenoid biosynthesis; isopentenyl diphosphate biosynthesis via DXP pathway; isopentenyl diphosphate from 1-deoxy-D-xylulose 5-phosphate: step 5/6. Converts 2C-methyl-D-erythritol 2,4-cyclodiphosphate (ME-2,4cPP) into 1-hydroxy-2-methyl-2-(E)-butenyl 4-diphosphate. The sequence is that of 4-hydroxy-3-methylbut-2-en-1-yl diphosphate synthase (flavodoxin) from Maridesulfovibrio salexigens (strain ATCC 14822 / DSM 2638 / NCIMB 8403 / VKM B-1763) (Desulfovibrio salexigens).